We begin with the raw amino-acid sequence, 288 residues long: Release factor glutamine methyltransferase (288 aa).

Residues 123-127, aspartate 146, and asparagine 190 each bind S-adenosyl-L-methionine; that span reads GTGSG. 190 to 193 contributes to the substrate binding site; sequence NPPY.

It belongs to the protein N5-glutamine methyltransferase family. PrmC subfamily.

It carries out the reaction L-glutaminyl-[peptide chain release factor] + S-adenosyl-L-methionine = N(5)-methyl-L-glutaminyl-[peptide chain release factor] + S-adenosyl-L-homocysteine + H(+). Functionally, methylates the class 1 translation termination release factors RF1/PrfA and RF2/PrfB on the glutamine residue of the universally conserved GGQ motif. This is Release factor glutamine methyltransferase from Bacillus subtilis (strain 168).